Here is a 312-residue protein sequence, read N- to C-terminus: DNA-directed RNA polymerase subunit alpha (312 aa).

The alpha N-terminal domain (alpha-NTD) stretch occupies residues 1–226 (MIEFEKPNIT…EHLDIFVNLT (226 aa)). The alpha C-terminal domain (alpha-CTD) stretch occupies residues 243–312 (KEKMLEMTIE…DLGLGLRKED (70 aa)).

The protein belongs to the RNA polymerase alpha chain family. In terms of assembly, homodimer. The RNAP catalytic core consists of 2 alpha, 1 beta, 1 beta' and 1 omega subunit. When a sigma factor is associated with the core the holoenzyme is formed, which can initiate transcription.

The catalysed reaction is RNA(n) + a ribonucleoside 5'-triphosphate = RNA(n+1) + diphosphate. Its function is as follows. DNA-dependent RNA polymerase catalyzes the transcription of DNA into RNA using the four ribonucleoside triphosphates as substrates. The chain is DNA-directed RNA polymerase subunit alpha from Lacticaseibacillus casei (strain BL23) (Lactobacillus casei).